A 421-amino-acid chain; its full sequence is 4-hydroxy-3-methylbut-2-en-1-yl diphosphate synthase (flavodoxin) (421 aa).

Residues Cys311, Cys314, Cys357, and Glu364 each coordinate [4Fe-4S] cluster.

The protein belongs to the IspG family. The cofactor is [4Fe-4S] cluster.

The enzyme catalyses (2E)-4-hydroxy-3-methylbut-2-enyl diphosphate + oxidized [flavodoxin] + H2O + 2 H(+) = 2-C-methyl-D-erythritol 2,4-cyclic diphosphate + reduced [flavodoxin]. The protein operates within isoprenoid biosynthesis; isopentenyl diphosphate biosynthesis via DXP pathway; isopentenyl diphosphate from 1-deoxy-D-xylulose 5-phosphate: step 5/6. Functionally, converts 2C-methyl-D-erythritol 2,4-cyclodiphosphate (ME-2,4cPP) into 1-hydroxy-2-methyl-2-(E)-butenyl 4-diphosphate. This Xanthomonas oryzae pv. oryzae (strain KACC10331 / KXO85) protein is 4-hydroxy-3-methylbut-2-en-1-yl diphosphate synthase (flavodoxin).